The chain runs to 505 residues: MSRSYNDELQYLDKIHKNCWRIRKGFVPNMQVEGVFYVNDPLEKLMFEELRNASRGGAAGGFLPAMKQIGNVAALPGIIHRSIGLPDVHSGYGFAIGNMAAFDMDNPEAVVSPGGVGFDINCGVRLLRTNLDESDVQPVKEQLAQAMFDHIPVGVGSKGVIPMGAKDLEEALEMGVDWSLREGYAWAEDKEHCEEYGRMLQADPSKVSSKAKKRGLPQLGTLGAGNHYAEVQVVDDIYDEYAAKKMGIDHKGQVCVMIHSGSRGLGHQVATDALVAMEKAMKRDKITVNDRQLACARISSAEGQDYLKGMAAAGNYAWVNRSSMTFLTRQAFSKVFNTTPDDLDLHVIYDVSHNIAKVEQHVVDGKEKTLLVHRKGSTRAFPPHHPLIPVDYQLTGQPVLIGGTMGTCSYVLTGTDQGMTETFGTTCHGAGRALSRAKSRRNLDFQDVLDKLADLGIAIRVASPKLVMEEAPESYKNVTDVVNTCHDAGISKKAIKLRPIAVIKG.

Residues aspartate 119, cysteine 122, histidine 227, histidine 259, and histidine 353 each contribute to the Mn(2+) site. Residue asparagine 226 to glutamate 230 participates in GMP binding. GMP is bound by residues histidine 353–asparagine 354, glycine 402–methionine 405, serine 409, histidine 428–glycine 431, and lysine 504. The active-site GMP-histidine intermediate is histidine 428.

The protein belongs to the RtcB family. Catalytic component of the tRNA-splicing ligase complex. The cofactor is Mn(2+).

Its subcellular location is the nucleus. The protein resides in the cytoplasm. It catalyses the reaction a 3'-end 3'-phospho-ribonucleotide-RNA + a 5'-end dephospho-ribonucleoside-RNA + GTP = a ribonucleotidyl-ribonucleotide-RNA + GMP + diphosphate. It carries out the reaction a 3'-end 2',3'-cyclophospho-ribonucleotide-RNA + a 5'-end dephospho-ribonucleoside-RNA + GTP + H2O = a ribonucleotidyl-ribonucleotide-RNA + GMP + diphosphate + H(+). Catalytic subunit of the tRNA-splicing ligase complex that acts by directly joining spliced tRNA halves to mature-sized tRNAs by incorporating the precursor-derived splice junction phosphate into the mature tRNA as a canonical 3',5'-phosphodiester. May act as an RNA ligase with broad substrate specificity, and may function toward other RNAs. The protein is RNA-splicing ligase RtcB homolog of Xenopus tropicalis (Western clawed frog).